The sequence spans 200 residues: MSRVYVGNLDPRVTERELEDEFRAFGVVRSVWVARRPPGYAFLDFEDPRDARDAIRALDGKNGWRVEQSHNRGERGGGGRGGDRGGGGGGRGGRGGSDLKCYECGETGHFARECRNRGGTGRRRSKSRSRTPPRYRRSPSYGRRSYSPRARSPPPPRRRSPSPPPARGRSYSRSPPPYRAREEVPYANGNGLKERRRSRS.

The RRM domain occupies 2–71; it reads SRVYVGNLDP…NGWRVEQSHN (70 aa). Residues 62-83 are compositionally biased toward basic and acidic residues; sequence NGWRVEQSHNRGERGGGGRGGD. Disordered regions lie at residues 62 to 97 and 112 to 200; these read NGWR…RGGS and RECR…RSRS. Gly residues predominate over residues 84–96; that stretch reads RGGGGGGRGGRGG. A CCHC-type zinc finger spans residues 99-116; sequence LKCYECGETGHFARECRN. A compositionally biased stretch (basic residues) spans 120 to 137; the sequence is TGRRRSKSRSRTPPRYRR. 7 positions are modified to phosphoserine: Ser-138, Ser-147, Ser-152, Ser-160, Ser-162, Ser-174, and Ser-200. Low complexity predominate over residues 138–150; that stretch reads SPSYGRRSYSPRA. The span at 151–166 shows a compositional bias: pro residues; that stretch reads RSPPPPRRRSPSPPPA.

It belongs to the splicing factor SR family. RSZ subfamily. As to quaternary structure, component of the spliceosome. Interacts with AFC2, RS2Z33 and RNU1. Extensively phosphorylated on serine residues in the RS domain. Phosphorylated by AFC2. In terms of tissue distribution, expressed in primary and lateral roots, stems, petioles, abaxial and adaxial epidermis cells, trichomes, unopened flowers, anther filaments, anthers, stigma, pollen, pollen tube, ovule funiculi, integuments, embryo sac and developing seeds.

The protein localises to the nucleus speckle. It is found in the nucleus. Its subcellular location is the nucleolus. The protein resides in the nucleoplasm. It localises to the cytoplasm. Its function is as follows. Sequence-specific RNA-binding protein probably involved in pre-mRNA splicing. In vitro, can complement efficiently splicing-deficient mammalian SRSF7-depleted HeLa cell extract. This Arabidopsis thaliana (Mouse-ear cress) protein is Serine/arginine-rich splicing factor RSZ22 (RSZ22).